A 363-amino-acid polypeptide reads, in one-letter code: uncharacterized protein (363 aa).

The signal sequence occupies residues 1 to 20 (MKRAPLITGLLLISTSCAYA).

This sequence belongs to the fimbrial protein family.

The protein resides in the fimbrium. In terms of biological role, part of the yraHIJK fimbrial operon. Could contribute to adhesion to various surfaces in specific environmental niches. Increases adhesion to eukaryotic T24 bladder epithelial cells in the absence of fim operon. This is an uncharacterized protein from Escherichia coli (strain K12).